A 397-amino-acid polypeptide reads, in one-letter code: Staphyloferrin A transporter (397 aa).

A run of 12 helical transmembrane segments spans residues 10-30, 39-59, 67-87, 93-110, 137-157, 162-182, 213-233, 245-265, 271-292, 296-313, 333-353, and 358-378; these read FLLF…VLTT, IVNF…GAIA, LLRI…VLTY, PISV…LSAV, FIIN…LAVY, TFLA…PLHF, IFIT…LLPV, IFGI…LVLP, IGMV…LGVV, IVIM…SQWA, VLSI…LMSI, and FGIV…TMVF.

The protein belongs to the major facilitator superfamily.

It localises to the cell membrane. Involved in staphyloferrin A secretion. In Staphylococcus aureus (strain NCTC 8325 / PS 47), this protein is Staphyloferrin A transporter.